Reading from the N-terminus, the 312-residue chain is MLQYQIDRIDHQIADDRSQTGTFLIGPLERGQATTLGNSLRRVLMGGLEGSAVTAVRIAGINHEYATIPGVREDVLDILLNCKQLSINSSSPDLEIGRLVASGPMDVKANDIQFSSQVEIVDGEKPIATIQEGHNLELEIHVERGVGYRPVDRKSEETTAIDLLQIDAVFMPVKRVNFTIDETAVAEGGTGRERLKMEVVTDGSTSPDDAIAEAANQLIELFQPLATVTMVEEIPEEPEPSPEAQIPLEELNLSVRAYNCLKRAQVNSVSDLMGFSYEDLLEIKNFGSKSADEVIDALERIGISIPQSRTSV.

Positions 1–229 are alpha N-terminal domain (alpha-NTD); sequence MLQYQIDRID…ELFQPLATVT (229 aa). Positions 241–312 are alpha C-terminal domain (alpha-CTD); that stretch reads SPEAQIPLEE…ISIPQSRTSV (72 aa).

It belongs to the RNA polymerase alpha chain family. In terms of assembly, in cyanobacteria the RNAP catalytic core is composed of 2 alpha, 1 beta, 1 beta', 1 gamma and 1 omega subunit. When a sigma factor is associated with the core the holoenzyme is formed, which can initiate transcription.

The catalysed reaction is RNA(n) + a ribonucleoside 5'-triphosphate = RNA(n+1) + diphosphate. Its function is as follows. DNA-dependent RNA polymerase catalyzes the transcription of DNA into RNA using the four ribonucleoside triphosphates as substrates. This is DNA-directed RNA polymerase subunit alpha from Prochlorococcus marinus (strain MIT 9215).